The chain runs to 559 residues: Probable alpha-(1-&gt;6)-mannopyranosyltransferase MSMEG_3120/MSMEI_3041 (559 aa).

12 helical membrane passes run 41–61 (FGAT…ARPV), 81–101 (VSLT…LMLG), 202–222 (IVEA…LIVW), 247–267 (LLFM…GLML), 300–316 (WQPM…IAMS), 321–340 (LPSL…RWGG), 355–375 (ISLA…GWLF), 386–406 (WMSP…LLGL), 419–439 (AIGV…VLRG), 455–475 (VLLF…PLAA), 480–500 (PGFR…GPTA), and 507–527 (LFQI…LIAL). Pro residues predominate over residues 535 to 548 (RPAPEPPARPPEQP). A disordered region spans residues 535-559 (RPAPEPPARPPEQPAPADDAYAESP).

Belongs to the MptA/B family.

It is found in the membrane. In terms of biological role, catalyzes the addition of alpha-(1-&gt;6)-mannose residue. The polypeptide is Probable alpha-(1-&gt;6)-mannopyranosyltransferase MSMEG_3120/MSMEI_3041 (Mycolicibacterium smegmatis (strain ATCC 700084 / mc(2)155) (Mycobacterium smegmatis)).